We begin with the raw amino-acid sequence, 247 residues long: 5-oxoprolinase subunit A (247 aa).

The protein belongs to the LamB/PxpA family. As to quaternary structure, forms a complex composed of PxpA, PxpB and PxpC.

It catalyses the reaction 5-oxo-L-proline + ATP + 2 H2O = L-glutamate + ADP + phosphate + H(+). In terms of biological role, catalyzes the cleavage of 5-oxoproline to form L-glutamate coupled to the hydrolysis of ATP to ADP and inorganic phosphate. In Ralstonia pickettii (strain 12J), this protein is 5-oxoprolinase subunit A.